Consider the following 428-residue polypeptide: Glutamate-1-semialdehyde 2,1-aminomutase (428 aa).

Lys-267 bears the N6-(pyridoxal phosphate)lysine mark.

The protein belongs to the class-III pyridoxal-phosphate-dependent aminotransferase family. HemL subfamily. In terms of assembly, homodimer. Requires pyridoxal 5'-phosphate as cofactor.

It localises to the cytoplasm. The enzyme catalyses (S)-4-amino-5-oxopentanoate = 5-aminolevulinate. It participates in porphyrin-containing compound metabolism; protoporphyrin-IX biosynthesis; 5-aminolevulinate from L-glutamyl-tRNA(Glu): step 2/2. The protein is Glutamate-1-semialdehyde 2,1-aminomutase of Persephonella marina (strain DSM 14350 / EX-H1).